The sequence spans 428 residues: Glucose-1-phosphate adenylyltransferase (428 aa).

Residues Tyr-99, Gly-164, 179–180 (EK), and Ser-190 contribute to the alpha-D-glucose 1-phosphate site.

It belongs to the bacterial/plant glucose-1-phosphate adenylyltransferase family. As to quaternary structure, homotetramer.

The enzyme catalyses alpha-D-glucose 1-phosphate + ATP + H(+) = ADP-alpha-D-glucose + diphosphate. Its pathway is glycan biosynthesis; glycogen biosynthesis. Its function is as follows. Involved in the biosynthesis of ADP-glucose, a building block required for the elongation reactions to produce glycogen. Catalyzes the reaction between ATP and alpha-D-glucose 1-phosphate (G1P) to produce pyrophosphate and ADP-Glc. This Thermomicrobium roseum (strain ATCC 27502 / DSM 5159 / P-2) protein is Glucose-1-phosphate adenylyltransferase.